A 210-amino-acid chain; its full sequence is Frataxin, mitochondrial (210 aa).

The transit peptide at 1-41 (MWTFGRRAVAGLLASPSPAQAQTLARAPRLAELAQLCSRRG) directs the protein to the mitochondrion.

Belongs to the frataxin family. As to quaternary structure, component of the mitochondrial core iron-sulfur cluster (ISC) complex composed of NFS1, LYRM4, NDUFAB1, ISCU, FXN, and FDX2; this complex is a heterohexamer containing two copies of each monomer. Homodimer. Monomer (probable predominant form). Oligomer. Monomers and polymeric aggregates of &gt;1 MDa have been isolated from mitochondria. A small fraction of heterologous overexpressed recombinant frataxin forms high-molecular weight aggregates that incorporate iron. Interacts with LYRM4. Interacts (via ferrous form) with ISCU; the interaction is possible when both are bound to the dimeric form of the cysteine desulfurase complex (NFS1:LYRM4) and the interaction enhances FXN interaction to the dimeric form of the cysteine desulfurase complex (NFS1:LYRM4). Interacts with FECH; one iron-bound FXN monomer seems to interact with a FECH homodimer. Interacts with SDHA and SDHB. Interacts with ACO2; the interaction is dependent on citrate. Interacts with HSPA9. Interacts with ACO1. Interacts with ISCU (cytoplasmic form). In terms of processing, processed in two steps by mitochondrial processing peptidase (MPP). MPP first cleaves the precursor to intermediate form and subsequently converts the intermediate to yield frataxin mature form (frataxin(81-210)) which is the predominant form. The additional forms, frataxin(56-210) and frataxin(78-210), seem to be produced when the normal maturation process is impaired; their physiological relevance is unsure.

Its subcellular location is the mitochondrion. The protein localises to the cytoplasm. It is found in the cytosol. The enzyme catalyses 4 Fe(2+) + O2 + 4 H(+) = 4 Fe(3+) + 2 H2O. Functions as an activator of persulfide transfer to the scaffoding protein ISCU as component of the core iron-sulfur cluster (ISC) assembly complex and participates to the [2Fe-2S] cluster assembly. Accelerates sulfur transfer from NFS1 persulfide intermediate to ISCU and to small thiols such as L-cysteine and glutathione leading to persulfuration of these thiols and ultimately sulfide release. Binds ferrous ion and is released from FXN upon the addition of both L-cysteine and reduced FDX2 during [2Fe-2S] cluster assembly. The core iron-sulfur cluster (ISC) assembly complex is involved in the de novo synthesis of a [2Fe-2S] cluster, the first step of the mitochondrial iron-sulfur protein biogenesis. This process is initiated by the cysteine desulfurase complex (NFS1:LYRM4:NDUFAB1) that produces persulfide which is delivered on the scaffold protein ISCU in a FXN-dependent manner. Then this complex is stabilized by FDX2 which provides reducing equivalents to accomplish the [2Fe-2S] cluster assembly. Finally, the [2Fe-2S] cluster is transferred from ISCU to chaperone proteins, including HSCB, HSPA9 and GLRX5. May play a role in the protection against iron-catalyzed oxidative stress through its ability to catalyze the oxidation of Fe(2+) to Fe(3+); the oligomeric form but not the monomeric form has in vitro ferroxidase activity. May be able to store large amounts of iron in the form of a ferrihydrite mineral by oligomerization; however, the physiological relevance is unsure as reports are conflicting and the function has only been shown using heterologous overexpression systems. May function as an iron chaperone protein that protects the aconitase [4Fe-4S]2+ cluster from disassembly and promotes enzyme reactivation. May play a role as a high affinity iron binding partner for FECH that is capable of both delivering iron to ferrochelatase and mediating the terminal step in mitochondrial heme biosynthesis. Functionally, modulates the RNA-binding activity of ACO1. May be involved in the cytoplasmic iron-sulfur protein biogenesis. May contribute to oxidative stress resistance and overall cell survival. The chain is Frataxin, mitochondrial from Macaca fascicularis (Crab-eating macaque).